A 185-amino-acid chain; its full sequence is Probable chorismate pyruvate-lyase 1 (185 aa).

Substrate contacts are provided by Arg68, Leu106, and Glu164.

Belongs to the UbiC family.

The protein resides in the cytoplasm. It carries out the reaction chorismate = 4-hydroxybenzoate + pyruvate. Its pathway is cofactor biosynthesis; ubiquinone biosynthesis. Its function is as follows. Removes the pyruvyl group from chorismate, with concomitant aromatization of the ring, to provide 4-hydroxybenzoate (4HB) for the ubiquinone pathway. The chain is Probable chorismate pyruvate-lyase 1 from Pseudomonas entomophila (strain L48).